A 610-amino-acid polypeptide reads, in one-letter code: Elongation factor 4 (610 aa).

The 183-residue stretch at 14–196 (NRIRNFSIIA…ALVANIPPPK (183 aa)) folds into the tr-type G domain. GTP-binding positions include 26-31 (DHGKST) and 143-146 (NKID).

It belongs to the TRAFAC class translation factor GTPase superfamily. Classic translation factor GTPase family. LepA subfamily.

The protein resides in the cell inner membrane. It carries out the reaction GTP + H2O = GDP + phosphate + H(+). In terms of biological role, required for accurate and efficient protein synthesis under certain stress conditions. May act as a fidelity factor of the translation reaction, by catalyzing a one-codon backward translocation of tRNAs on improperly translocated ribosomes. Back-translocation proceeds from a post-translocation (POST) complex to a pre-translocation (PRE) complex, thus giving elongation factor G a second chance to translocate the tRNAs correctly. Binds to ribosomes in a GTP-dependent manner. In Legionella pneumophila (strain Lens), this protein is Elongation factor 4.